We begin with the raw amino-acid sequence, 365 residues long: MKGKTLLAGCIALSLSHMAFADDIKVAVVGAMSGPVAQYGDQEFTGAEQAIADINAKGGIKGDKLVAVKYDDACDPKQAVAVANKVVNDGIKYVIGHLCSSSTQPASDIYEDEGILMITPAATAPELTARGYKLVLRTTGLDSDQGPTAAKYILEKVKPQRIAIIHDKQQYGEGLARAVQDGLKKGGVNVVFFDGITAGEKDFSTLVARLKKENIDFVYYGGYHPEMGQILRQSRAAGLKTQFMGPEGVANVSLSNIAGESAEGLLVTKPKNYDQVPANKPIVDAIKAKKQDPSGAFVWTTYAALQSLQAGLNHSDDPAEIAKYLKGATVDTVMGPLSWDEKGDLKGFEFGVFDWHANGTATDAK.

An N-terminal signal peptide occupies residues 1 to 21 (MKGKTLLAGCIALSLSHMAFA). A disulfide bridge connects residues Cys-74 and Cys-99.

Belongs to the leucine-binding protein family.

Its subcellular location is the periplasm. Its function is as follows. This protein is a component of the leucine, isoleucine, valine, threonine transport system, which is one of the two periplasmic binding protein-dependent transport systems of the high-affinity transport of the branched-chain amino acids. This is Leu/Ile/Val/Thr-binding protein (livJ) from Salmonella typhimurium (strain LT2 / SGSC1412 / ATCC 700720).